The sequence spans 815 residues: (E)-gamma-bisabolene synthase (815 aa).

Residues D561, D565, D709, and E717 each coordinate Mg(2+). The DDXXD motif signature appears at 561–565 (DDMYD).

The protein belongs to the terpene synthase family. Tpsd subfamily. Mg(2+) serves as cofactor. Requires Mn(2+) as cofactor.

The protein localises to the cytoplasm. It carries out the reaction (2E,6E)-farnesyl diphosphate = (E)-gamma-bisabolene + diphosphate. The protein operates within terpene metabolism; oleoresin biosynthesis. Functionally, involved in defensive oleoresin formation in conifers in response to insect attack or other injury. Involved in sesquiterpene (C15) olefins biosynthesis. Produces mainly (E)-gamma-bisabolene when used with farnesyl diphosphate as substrate. No activity with geranyl diphosphate or geranylgeranyl diphosphate. In Pseudotsuga menziesii (Douglas-fir), this protein is (E)-gamma-bisabolene synthase (TPS3).